The chain runs to 256 residues: Inner membrane transport permease YadH (256 aa).

Topologically, residues Met1–Arg22 are periplasmic. Residues Arg22 to Gly251 form the ABC transmembrane type-2 domain. Residues Ile23–Gly43 form a helical membrane-spanning segment. Residues Asn44–Asp52 are Cytoplasmic-facing. A helical transmembrane segment spans residues Met53 to Thr73. The Periplasmic portion of the chain corresponds to Asn74–Glu94. A helical transmembrane segment spans residues Leu95–Ala115. Position 116 (Arg116) is a topological domain, cytoplasmic. Residues Gly117–His137 form a helical membrane-spanning segment. Position 138 (Ser138) is a topological domain, periplasmic. A helical membrane pass occupies residues Trp139–Leu159. Residues Asn160–Asp169 lie on the Cytoplasmic side of the membrane. Residues Ile170 to Ser190 traverse the membrane as a helical segment. At Leu191 to Asp223 the chain is on the periplasmic side. The chain crosses the membrane as a helical span at residues Val224–Cys244. At Trp245–Ser256 the chain is on the cytoplasmic side.

This sequence belongs to the ABC-2 integral membrane protein family.

The protein resides in the cell inner membrane. This Escherichia coli O157:H7 protein is Inner membrane transport permease YadH (yadH).